Consider the following 424-residue polypeptide: UPF0229 protein Avin_46880 (424 aa).

The disordered stretch occupies residues 57–108 (RDIDEPVLHHGRGGKQTIVHPGNKEFTAGERIPRPSGGGGGGSGSGKASNSG). Over residues 92–101 (SGGGGGGSGS) the composition is skewed to gly residues.

It belongs to the UPF0229 family.

The protein is UPF0229 protein Avin_46880 of Azotobacter vinelandii (strain DJ / ATCC BAA-1303).